We begin with the raw amino-acid sequence, 652 residues long: Phosphomethylpyrimidine synthase (652 aa).

Substrate contacts are provided by residues Asn235, Met264, Tyr293, His329, 349 to 351 (SRG), 390 to 393 (DGMR), and Glu429. His433 is a binding site for Zn(2+). Tyr456 is a substrate binding site. Position 497 (His497) interacts with Zn(2+). Positions 577, 580, and 585 each coordinate [4Fe-4S] cluster.

Belongs to the ThiC family. Homodimer. [4Fe-4S] cluster serves as cofactor.

It carries out the reaction 5-amino-1-(5-phospho-beta-D-ribosyl)imidazole + S-adenosyl-L-methionine = 4-amino-2-methyl-5-(phosphooxymethyl)pyrimidine + CO + 5'-deoxyadenosine + formate + L-methionine + 3 H(+). Its pathway is cofactor biosynthesis; thiamine diphosphate biosynthesis. Catalyzes the synthesis of the hydroxymethylpyrimidine phosphate (HMP-P) moiety of thiamine from aminoimidazole ribotide (AIR) in a radical S-adenosyl-L-methionine (SAM)-dependent reaction. The polypeptide is Phosphomethylpyrimidine synthase (Shewanella sediminis (strain HAW-EB3)).